The chain runs to 429 residues: Glutamate-1-semialdehyde 2,1-aminomutase 1 (429 aa).

The residue at position 268 (Lys268) is an N6-(pyridoxal phosphate)lysine.

This sequence belongs to the class-III pyridoxal-phosphate-dependent aminotransferase family. HemL subfamily. Homodimer. Pyridoxal 5'-phosphate serves as cofactor.

The protein localises to the cytoplasm. It carries out the reaction (S)-4-amino-5-oxopentanoate = 5-aminolevulinate. Its pathway is porphyrin-containing compound metabolism; protoporphyrin-IX biosynthesis; 5-aminolevulinate from L-glutamyl-tRNA(Glu): step 2/2. The polypeptide is Glutamate-1-semialdehyde 2,1-aminomutase 1 (Listeria welshimeri serovar 6b (strain ATCC 35897 / DSM 20650 / CCUG 15529 / CIP 8149 / NCTC 11857 / SLCC 5334 / V8)).